The primary structure comprises 390 residues: S-adenosylmethionine synthase 4 (390 aa).

A Mg(2+)-binding site is contributed by E9. Residue H15 coordinates ATP. E43 lines the K(+) pocket. Residues E56 and Q99 each coordinate L-methionine. ATP is bound by residues 167-169 (DGK), 235-238 (SGRF), D246, 252-253 (RK), A269, K273, and K277. An L-methionine-binding site is contributed by D246. K277 is a binding site for L-methionine.

This sequence belongs to the AdoMet synthase family. As to quaternary structure, homotetramer. Requires Mn(2+) as cofactor. Mg(2+) serves as cofactor. The cofactor is Co(2+). It depends on K(+) as a cofactor. Mostly expressed in flowers, seedpods and roots, and, to a lower extent, in stems and leaves.

The protein resides in the cytoplasm. It catalyses the reaction L-methionine + ATP + H2O = S-adenosyl-L-methionine + phosphate + diphosphate. It functions in the pathway amino-acid biosynthesis; S-adenosyl-L-methionine biosynthesis; S-adenosyl-L-methionine from L-methionine: step 1/1. Catalyzes the formation of S-adenosylmethionine from methionine and ATP. The reaction comprises two steps that are both catalyzed by the same enzyme: formation of S-adenosylmethionine (AdoMet) and triphosphate, and subsequent hydrolysis of the triphosphate. In Brassica juncea (Indian mustard), this protein is S-adenosylmethionine synthase 4 (MSAMS4).